The sequence spans 1013 residues: 2-oxoglutarate dehydrogenase, mitochondrial (1013 aa).

A mitochondrion-targeting transit peptide spans 1–39 (MFTLKQVINKSIQTSMKNGVMSSAVKRSFSTVGGINQPK). The thiamine diphosphate site is built by Arg-302, Asp-403, Asn-436, Ile-438, and Gln-664. Mg(2+) is bound by residues Asp-403, Asn-436, and Ile-438.

This sequence belongs to the alpha-ketoglutarate dehydrogenase family. In terms of assembly, homodimer. Component of the 2-oxoglutarate dehydrogenase complex. Thiamine diphosphate serves as cofactor. It depends on Mg(2+) as a cofactor.

The protein resides in the mitochondrion matrix. It carries out the reaction N(6)-[(R)-lipoyl]-L-lysyl-[protein] + 2-oxoglutarate + H(+) = N(6)-[(R)-S(8)-succinyldihydrolipoyl]-L-lysyl-[protein] + CO2. The 2-oxoglutarate dehydrogenase complex catalyzes the overall conversion of 2-oxoglutarate to succinyl-CoA and CO(2). It contains multiple copies of three enzymatic components: 2-oxoglutarate dehydrogenase (E1), dihydrolipoamide succinyltransferase (E2) and lipoamide dehydrogenase (E3). The chain is 2-oxoglutarate dehydrogenase, mitochondrial (ogdh) from Dictyostelium discoideum (Social amoeba).